Consider the following 185-residue polypeptide: MSKDDSIKKTVTIGLSAAIFFVLSCFASIPVGFNVSIETSVAFLAFIAVAFGPAVGFYVGLIGNTIKDFILFGNVSWNWVLCSALIGFIYGLPHKIIDLKYQVFTKKKIVYFWLYQVAFNFIIWGFFAPQSDLLIYGQPPKLVYLQSFLIVISNILAYSVVGIKLMSMYSCHYNKQATLIKINNS.

Transmembrane regions (helical) follow at residues Ile-13–Phe-33, Ala-42–Ile-62, Phe-69–Ile-89, Ile-109–Pro-129, and Val-143–Ile-163.

This sequence belongs to the UPF0397 family.

It is found in the cell membrane. The chain is UPF0397 protein PAM_019 from Onion yellows phytoplasma (strain OY-M).